A 220-amino-acid polypeptide reads, in one-letter code: Small ribosomal subunit protein uS3 (220 aa).

Residues 24–93 (IKEFLEYRLS…NPQIDVIDVS (70 aa)) form the KH type-2 domain.

Belongs to the universal ribosomal protein uS3 family. Part of the 30S ribosomal subunit.

Functionally, binds the lower part of the 30S subunit head. The sequence is that of Small ribosomal subunit protein uS3 from Pyrobaculum arsenaticum (strain DSM 13514 / JCM 11321 / PZ6).